Consider the following 225-residue polypeptide: Germin-like protein 8-6 (225 aa).

The N-terminal stretch at 1-23 (MASPSSLCLLTALLALVSWQTIA) is a signal peptide. A disulfide bridge connects residues Cys33 and Cys48. The Cupin type-1 domain occupies 63–213 (AMLDTPRKTN…AFQVEKGTID (151 aa)). Residue Asn77 is glycosylated (N-linked (GlcNAc...) asparagine). Mn(2+) is bound by residues His110, His112, and Glu117. N-linked (GlcNAc...) asparagine glycosylation occurs at Asn136. Position 158 (His158) interacts with Mn(2+).

The protein belongs to the germin family. As to quaternary structure, oligomer (believed to be a pentamer but probably hexamer).

The protein localises to the secreted. It is found in the extracellular space. It localises to the apoplast. Plays a role in broad-spectrum disease resistance. Probably has no oxalate oxidase activity even if the active site is conserved. In Oryza sativa subsp. japonica (Rice), this protein is Germin-like protein 8-6.